A 140-amino-acid polypeptide reads, in one-letter code: Nucleoside diphosphate kinase (140 aa).

Residues K11, F59, R87, T93, R104, and N114 each contribute to the ATP site. The Pros-phosphohistidine intermediate role is filled by H117.

The protein belongs to the NDK family. In terms of assembly, homotetramer. Requires Mg(2+) as cofactor.

Its subcellular location is the cytoplasm. It catalyses the reaction a 2'-deoxyribonucleoside 5'-diphosphate + ATP = a 2'-deoxyribonucleoside 5'-triphosphate + ADP. It carries out the reaction a ribonucleoside 5'-diphosphate + ATP = a ribonucleoside 5'-triphosphate + ADP. In terms of biological role, major role in the synthesis of nucleoside triphosphates other than ATP. The ATP gamma phosphate is transferred to the NDP beta phosphate via a ping-pong mechanism, using a phosphorylated active-site intermediate. This is Nucleoside diphosphate kinase from Dinoroseobacter shibae (strain DSM 16493 / NCIMB 14021 / DFL 12).